The following is an 863-amino-acid chain: Adenosylcobalamin biosynthesis bifunctional protein CobDQ (863 aa).

The interval 1–373 is putative threonine-phosphate decarboxylase; that stretch reads MNLPEHGGNL…LKSRKKTPSI (373 aa). O-phospho-L-threonine contacts are provided by residues 6-7, Asn-30, and Asn-159; that span reads HG. N6-(pyridoxal phosphate)lysine is present on Lys-214. 2 residues coordinate O-phospho-L-threonine: Arg-323 and Arg-337. A cobyric acid synthase region spans residues 374 to 863; sequence MFQGTASNVG…NLIYRKLGLG (490 aa). A GATase cobBQ-type domain is found at 622-810; sequence RLDVVLIDIP…IHGIFDKDEF (189 aa). Cys-704 (nucleophile) is an active-site residue. His-802 is a catalytic residue.

The protein in the N-terminal section; belongs to the class-II pyridoxal-phosphate-dependent aminotransferase family. It in the C-terminal section; belongs to the CobB/CobQ family. CobQ subfamily. It depends on pyridoxal 5'-phosphate as a cofactor.

It catalyses the reaction O-phospho-L-threonine + H(+) = (R)-1-aminopropan-2-yl phosphate + CO2. It participates in cofactor biosynthesis; adenosylcobalamin biosynthesis. Its function is as follows. Catalyzes two activities which are involved in the adenosylcobalamin biosynthesis: decarboxylates L-threonine-O-3-phosphate to yield (R)-1-amino-2-propanol O-2-phosphate, the precursor for the linkage between the nucleotide loop and the corrin ring in cobalamin, and catalyzes amidations at positions B, D, E, and G on adenosylcobyrinic A,C-diamide. NH(2) groups are provided by glutamine, and one molecule of ATP is hydrogenolyzed for each amidation. The polypeptide is Adenosylcobalamin biosynthesis bifunctional protein CobDQ (cobDQ) (Leptospira interrogans serogroup Icterohaemorrhagiae serovar Lai (strain 56601)).